The sequence spans 115 residues: Ribonuclease P protein component (115 aa).

Belongs to the RnpA family. In terms of assembly, consists of a catalytic RNA component (M1 or rnpB) and a protein subunit.

It catalyses the reaction Endonucleolytic cleavage of RNA, removing 5'-extranucleotides from tRNA precursor.. RNaseP catalyzes the removal of the 5'-leader sequence from pre-tRNA to produce the mature 5'-terminus. It can also cleave other RNA substrates such as 4.5S RNA. The protein component plays an auxiliary but essential role in vivo by binding to the 5'-leader sequence and broadening the substrate specificity of the ribozyme. This chain is Ribonuclease P protein component, found in Symbiobacterium thermophilum (strain DSM 24528 / JCM 14929 / IAM 14863 / T).